The chain runs to 256 residues: Geranylgeranylglyceryl phosphate synthase (256 aa).

Mg(2+)-binding residues include Asp-28 and Ser-53. Sn-glycerol 1-phosphate contacts are provided by residues 172 to 178 (YLEAGSG), 203 to 204 (GG), and 225 to 226 (GT).

This sequence belongs to the GGGP/HepGP synthase family. Group II subfamily. Requires Mg(2+) as cofactor.

The protein resides in the cytoplasm. It carries out the reaction sn-glycerol 1-phosphate + (2E,6E,10E)-geranylgeranyl diphosphate = sn-3-O-(geranylgeranyl)glycerol 1-phosphate + diphosphate. It participates in membrane lipid metabolism; glycerophospholipid metabolism. Prenyltransferase that catalyzes the transfer of the geranylgeranyl moiety of geranylgeranyl diphosphate (GGPP) to the C3 hydroxyl of sn-glycerol-1-phosphate (G1P). This reaction is the first ether-bond-formation step in the biosynthesis of archaeal membrane lipids. This Methanococcus maripaludis (strain C5 / ATCC BAA-1333) protein is Geranylgeranylglyceryl phosphate synthase.